A 181-amino-acid chain; its full sequence is Oligoribonuclease (181 aa).

The 164-residue stretch at 8–171 (LIWVDLEMTG…VDIQESIAEL (164 aa)) folds into the Exonuclease domain. Tyrosine 129 is a catalytic residue.

The protein belongs to the oligoribonuclease family.

It localises to the cytoplasm. 3'-to-5' exoribonuclease specific for small oligoribonucleotides. The polypeptide is Oligoribonuclease (Shewanella loihica (strain ATCC BAA-1088 / PV-4)).